We begin with the raw amino-acid sequence, 184 residues long: Chaperone protein dnaJ 72 (184 aa).

One can recognise a J domain in the interval 3 to 73; that stretch reads DHYQVLGVTR…LKRASYNAGS (71 aa). A helical transmembrane segment spans residues 133–150; it reads FLLNLALAGGLYFAFTAI.

It belongs to the DnaJ family. C/III subfamily.

The protein resides in the membrane. Functionally, plays a continuous role in plant development probably in the structural organization of compartments. This is Chaperone protein dnaJ 72 (ATJ72) from Arabidopsis thaliana (Mouse-ear cress).